We begin with the raw amino-acid sequence, 203 residues long: Probable NADPH:quinone oxidoreductase 2 (203 aa).

Belongs to the SsuE family. In terms of assembly, homotetramer. FMN serves as cofactor.

It carries out the reaction a quinone + NADH + H(+) = a quinol + NAD(+). The catalysed reaction is a quinone + NADPH + H(+) = a quinol + NADP(+). In terms of biological role, the enzyme apparently serves as a quinone reductase in connection with conjugation reactions of hydroquinones involved in detoxification pathways. The chain is Probable NADPH:quinone oxidoreductase 2 from Oryza sativa subsp. japonica (Rice).